Reading from the N-terminus, the 135-residue chain is Helix-loop-helix protein 2 (135 aa).

The disordered stretch occupies residues Met-1–Ser-80. Residues Asp-10 to Pro-21 show a composition bias toward basic and acidic residues. Residues Lys-68–Ser-80 are compositionally biased toward basic residues. The region spanning Lys-77–Leu-129 is the bHLH domain.

As to quaternary structure, homodimer. Interacts and may form heterodimers with STAT3.

It localises to the nucleus. In terms of biological role, transcription factor which binds the E box motif 5'-CA[TC][AG]TG-3'. Involved in regulating energy expenditure, body mass, voluntary physical activity, mating behavior and reproductive longevity, acting through the hypothalamic-pituitary-gonadal axis. Acts as a transcriptional activator of target genes, including NDN, PCSK1, MC4R. Is also a transcriptional activator of KISS1. May act centrally to regulate function of both white and brown adipose tissue. Together with NHLH1, required to maintain migration and survival of cells in the anterior extramural migration stream (aes), which forms the precerebellar nuclei. Also, in concert with NHLH1, may determine fate of gonadotropin releasing hormone-1 (GnRH-1) neurons. In Homo sapiens (Human), this protein is Helix-loop-helix protein 2 (NHLH2).